We begin with the raw amino-acid sequence, 983 residues long: Type IV secretion system protein CagE (983 aa).

597-604 (GSTGSGKT) provides a ligand contact to ATP.

It belongs to the TrbE/VirB4 family. Component of the Cag type IV secretion system, which is composed of a wheel-shaped outer membrane complex (OMC) and an inner membrane complex (IMC). Interacts with CagV and CagBeta.

The protein resides in the cell inner membrane. It carries out the reaction ATP + H2O + cellular proteinSide 1 = ADP + phosphate + cellular proteinSide 2.. In terms of biological role, ATPase component of the type IV secretion system Cag (Cag-T4SS). Acts as a molecular motor to provide the energy that is required for the export of proteins. Required for CagA translocation and induction of IL-8 in host gastric epithelial cells. Plays a key role in Cag-T4SS pilus biogenesis, especially in the localization and stabilization of the pilus-associated components CagI, CagL and the surface protein CagH. Is also critical for assembly of the entire cytoplasmic portion of the Cag inner membrane complex (IMC). This chain is Type IV secretion system protein CagE, found in Helicobacter pylori (strain ATCC 700392 / 26695) (Campylobacter pylori).